The sequence spans 389 residues: NADH-quinone oxidoreductase subunit D (389 aa).

This sequence belongs to the complex I 49 kDa subunit family. In terms of assembly, NDH-1 is composed of 14 different subunits. Subunits NuoB, C, D, E, F, and G constitute the peripheral sector of the complex.

Its subcellular location is the cell inner membrane. It catalyses the reaction a quinone + NADH + 5 H(+)(in) = a quinol + NAD(+) + 4 H(+)(out). In terms of biological role, NDH-1 shuttles electrons from NADH, via FMN and iron-sulfur (Fe-S) centers, to quinones in the respiratory chain. The immediate electron acceptor for the enzyme in this species is believed to be ubiquinone. Couples the redox reaction to proton translocation (for every two electrons transferred, four hydrogen ions are translocated across the cytoplasmic membrane), and thus conserves the redox energy in a proton gradient. The chain is NADH-quinone oxidoreductase subunit D from Citrifermentans bemidjiense (strain ATCC BAA-1014 / DSM 16622 / JCM 12645 / Bem) (Geobacter bemidjiensis).